The primary structure comprises 705 residues: uncharacterized protein (705 aa).

Residues Ser-554 and His-676 each act as charge relay system in the active site.

Belongs to the peptidase S9A family.

This is an uncharacterized protein from Sinorhizobium fredii (strain NBRC 101917 / NGR234).